Here is a 161-residue protein sequence, read N- to C-terminus: Nucleotide-binding protein Bphyt_3208 (161 aa).

The protein belongs to the YajQ family.

Nucleotide-binding protein. The polypeptide is Nucleotide-binding protein Bphyt_3208 (Paraburkholderia phytofirmans (strain DSM 17436 / LMG 22146 / PsJN) (Burkholderia phytofirmans)).